We begin with the raw amino-acid sequence, 347 residues long: Very-long-chain 3-oxoacyl-CoA reductase (347 aa).

A helical membrane pass occupies residues 22–42 (LLWSIFGFGVLKATTLILRIM). Val-68, Asp-122, Asn-149, Tyr-223, Lys-227, Val-256, and Ser-258 together coordinate NADP(+). Catalysis depends on Tyr-223, which acts as the Proton donor. Lys-227 acts as the Lowers pKa of active site Tyr in catalysis.

Belongs to the short-chain dehydrogenases/reductases (SDR) family.

The protein resides in the endoplasmic reticulum membrane. It carries out the reaction a very-long-chain (3R)-3-hydroxyacyl-CoA + NADP(+) = a very-long-chain 3-oxoacyl-CoA + NADPH + H(+). It functions in the pathway lipid metabolism; fatty acid biosynthesis. Functionally, component of the microsomal membrane bound fatty acid elongation system, which produces the 26-carbon very long-chain fatty acids (VLCFA) from palmitate. Catalyzes the reduction of the 3-ketoacyl-CoA intermediate that is formed in each cycle of fatty acid elongation. VLCFAs serve as precursors for ceramide and sphingolipids. This chain is Very-long-chain 3-oxoacyl-CoA reductase, found in Vanderwaltozyma polyspora (strain ATCC 22028 / DSM 70294 / BCRC 21397 / CBS 2163 / NBRC 10782 / NRRL Y-8283 / UCD 57-17) (Kluyveromyces polysporus).